A 91-amino-acid chain; its full sequence is Small ribosomal subunit protein uS15c (91 aa).

This sequence belongs to the universal ribosomal protein uS15 family. In terms of assembly, part of the 30S ribosomal subunit.

Its subcellular location is the plastid. The protein localises to the chloroplast. The sequence is that of Small ribosomal subunit protein uS15c (rps15) from Ceratophyllum demersum (Rigid hornwort).